The sequence spans 132 residues: Large ribosomal subunit protein uL14 (132 aa).

It belongs to the universal ribosomal protein uL14 family. In terms of assembly, part of the 50S ribosomal subunit. Forms a cluster with proteins L3 and L24e, part of which may contact the 16S rRNA in 2 intersubunit bridges.

Functionally, binds to 23S rRNA. Forms part of two intersubunit bridges in the 70S ribosome. The chain is Large ribosomal subunit protein uL14 from Methanocorpusculum labreanum (strain ATCC 43576 / DSM 4855 / Z).